The primary structure comprises 277 residues: Insertion element IS407 uncharacterized 31.7 kDa protein (277 aa).

The 162-residue stretch at 103–264 folds into the Integrase catalytic domain; it reads LPGAPNEVWS…APSEFAAKHR (162 aa).

This Burkholderia multivorans (strain ATCC 17616 / 249) protein is Insertion element IS407 uncharacterized 31.7 kDa protein.